Consider the following 418-residue polypeptide: MQNLRHAASEAFQRLGLKQRHLGYEELGELDGVEKPQPHWFHTLQVRRLRVQRGRSNSDPMGGKSFQQEFQWKTGLQFGNATSYLNLEKLGEGTYATVYKGISRINGHLVALKVIHMKTEEGIPFTAIREASLLKGLKHANIVLLHDIIHTRESLTFVFEYVQTDLAQYMIQHPGGLHSYNIRLFMFQLLRGLSYIHGRRILHRDLKPQNLLISYLGELKLADFGLARSKSIPCQTYSAEVVTLWYRPPDVLMGSTDYSTALDIWGAGCIFIEMLQGSPAFPGVADVFEQLLKIWTVIGVPTEEIWPGVSDLPNYKPEWFLPCKPQQFRDVWKRLSQLPYKTEDLAQQMLMMNPKDRISAQDALLHPYFNTLPPPLMHLRDTVSIFKVPGVRLESEARDIFSPSRRTKTPLAPLAKCW.

The Protein kinase domain maps to 84–369 (YLNLEKLGEG…AQDALLHPYF (286 aa)). ATP contacts are provided by residues 90-98 (LGEGTYATV) and Lys113. Asp205 functions as the Proton acceptor in the catalytic mechanism.

This sequence belongs to the protein kinase superfamily. CMGC Ser/Thr protein kinase family. CDC2/CDKX subfamily. Mg(2+) serves as cofactor.

The enzyme catalyses L-seryl-[protein] + ATP = O-phospho-L-seryl-[protein] + ADP + H(+). The catalysed reaction is L-threonyl-[protein] + ATP = O-phospho-L-threonyl-[protein] + ADP + H(+). Its function is as follows. Serine/threonine-protein kinase involved in the control of the eukaryotic cell cycle, whose activity is controlled by an associated cyclin. This is Cyclin-dependent kinase 15 (cdk15) from Danio rerio (Zebrafish).